The chain runs to 881 residues: Interference hedgehog (881 aa).

The N-terminal stretch at 1-26 (MSSSSSSLLLMMLLLLLLLLTSKLEA) is a signal peptide. Topologically, residues 27–693 (IPVLSSTSPS…NHNETYSLNP (667 aa)) are extracellular. 4 consecutive Ig-like C2-type domains span residues 37–138 (PGVR…IARL), 128–228 (PLVV…IPSS), 242–330 (PYLL…YINV), and 336–425 (PVIV…LQVN). 3 disulfides stabilise this stretch: Cys-60–Cys-122, Cys-167–Cys-212, and Cys-266–Cys-314. Asn-75, Asn-98, Asn-194, Asn-201, Asn-282, Asn-349, Asn-381, Asn-430, and Asn-455 each carry an N-linked (GlcNAc...) asparagine glycan. The cysteines at positions 358 and 407 are disulfide-linked. Fibronectin type-III domains follow at residues 450-558 (PPSA…LQRG) and 566-661 (VPEL…TQRS). Heparin is bound by residues Arg-486, Lys-492, and Lys-494. The N-linked (GlcNAc...) asparagine glycan is linked to Asn-517. Arg-532 is a binding site for heparin. Asn-548 is a glycosylation site (N-linked (GlcNAc...) asparagine). The disordered stretch occupies residues 655–685 (QGRTQRSKLTTTEQPIQQKGGDRNVNTTPNH). Residues 656–671 (GRTQRSKLTTTEQPIQ) are compositionally biased toward polar residues. Asn-686 is a glycosylation site (N-linked (GlcNAc...) asparagine). The chain crosses the membrane as a helical span at residues 694–714 (LLTGTIGGGALLLLLLIAFSF). The Cytoplasmic segment spans residues 715 to 881 (CLCRRKNRNG…SSGSLNSVGV (167 aa)). Disordered regions lie at residues 768–791 (NPLD…NSPH) and 809–881 (PTTY…SVGV). Positions 837-855 (PGSNNNLQQIGSETTTTGQ) are enriched in polar residues. The segment covering 865–881 (SSRSENLSSGSLNSVGV) has biased composition (low complexity).

The protein belongs to the immunoglobulin superfamily. IHOG family. Homodimer. Heterotetramer; 2 iHog chains bind 2 hh chains when facilitated by heparin, heparin is required to promote high-affinity interactions between hh and iHog.

Its subcellular location is the membrane. In terms of biological role, mediates response to the active Hedgehog (Hh) protein signal in embryos, functioning upstream or at the level of patched (ptc). The sequence is that of Interference hedgehog from Drosophila willistoni (Fruit fly).